We begin with the raw amino-acid sequence, 516 residues long: Signal recognition particle protein (516 aa).

Residues 108–115 (GLQGAGKT), 191–195 (DTAGR), and 249–252 (TKID) each bind GTP. The segment at 383–405 (MTPEERENPDLLTPSRRRRIASG) is disordered.

It belongs to the GTP-binding SRP family. SRP54 subfamily. As to quaternary structure, part of the signal recognition particle protein translocation system, which is composed of SRP and FtsY.

It is found in the cytoplasm. It carries out the reaction GTP + H2O = GDP + phosphate + H(+). Involved in targeting and insertion of nascent membrane proteins into the cytoplasmic membrane. Binds to the hydrophobic signal sequence of the ribosome-nascent chain (RNC) as it emerges from the ribosomes. The SRP-RNC complex is then targeted to the cytoplasmic membrane where it interacts with the SRP receptor FtsY. This is Signal recognition particle protein from Streptococcus mutans serotype c (strain ATCC 700610 / UA159).